Consider the following 530-residue polypeptide: 5-aminolevulinate synthase, mitochondrial (530 aa).

Residues 1-26 constitute a mitochondrion transit peptide; it reads MFRPVLKVRPSFSYPYSIVSSRSVRL. Substrate contacts are provided by R73, S186, and K205. Pyridoxal 5'-phosphate contacts are provided by S238, H266, and T316. K319 is a catalytic residue. K319 carries the post-translational modification N6-(pyridoxal phosphate)lysine. Pyridoxal 5'-phosphate is bound by residues T348 and T349. T434 lines the substrate pocket.

It belongs to the class-II pyridoxal-phosphate-dependent aminotransferase family. As to quaternary structure, homodimer. It depends on pyridoxal 5'-phosphate as a cofactor.

Its subcellular location is the mitochondrion matrix. It catalyses the reaction succinyl-CoA + glycine + H(+) = 5-aminolevulinate + CO2 + CoA. The protein operates within porphyrin-containing compound metabolism; protoporphyrin-IX biosynthesis; 5-aminolevulinate from glycine: step 1/1. Its function is as follows. Catalyzes the synthesis of 5-aminolevulinate (ALA) from succinyl-CoA and glycine, the first and rate-limiting step in heme biosynthesis. In Candida glabrata (strain ATCC 2001 / BCRC 20586 / JCM 3761 / NBRC 0622 / NRRL Y-65 / CBS 138) (Yeast), this protein is 5-aminolevulinate synthase, mitochondrial (HEM1).